We begin with the raw amino-acid sequence, 756 residues long: Probable chemoreceptor y4sI (756 aa).

2 consecutive transmembrane segments (helical) span residues 26–46 and 330–350; these read VCVA…TSVA and LIKI…MAIL. 2 consecutive HAMP domains span residues 353–406 and 434–486; these read RSIS…ARVA and DEQA…ETIR. One can recognise a Methyl-accepting transducer domain in the interval 491–720; sequence QAASMSSIVS…ESDAACRSLN (230 aa). Positions 736–756 are disordered; sequence GGGSSTRQPQSPPTQRYFMSR.

Belongs to the methyl-accepting chemotaxis (MCP) protein family.

The protein resides in the cell membrane. Functionally, chemotactic-signal transducers respond to changes in the concentration of attractants and repellents in the environment, transduce a signal from the outside to the inside of the cell, and facilitate sensory adaptation through the variation of the level of methylation. Attractants increase the level of methylation while repellents decrease the level of methylation. The chain is Probable chemoreceptor y4sI from Sinorhizobium fredii (strain NBRC 101917 / NGR234).